Consider the following 158-residue polypeptide: Transcription antitermination protein NusB (158 aa).

Over residues 1 to 13 (MSEAGDTSPQPGK) the composition is skewed to polar residues. The segment at 1-24 (MSEAGDTSPQPGKTGQPKAGDRRR) is disordered.

It belongs to the NusB family.

Functionally, involved in transcription antitermination. Required for transcription of ribosomal RNA (rRNA) genes. Binds specifically to the boxA antiterminator sequence of the ribosomal RNA (rrn) operons. This chain is Transcription antitermination protein NusB, found in Marinobacter nauticus (strain ATCC 700491 / DSM 11845 / VT8) (Marinobacter aquaeolei).